Here is a 266-residue protein sequence, read N- to C-terminus: Undecaprenyl-diphosphatase (266 aa).

7 helical membrane-spanning segments follow: residues P39–F59, S86–P106, V112–L132, N147–S167, F189–S209, L216–I236, and N246–L266.

The protein belongs to the UppP family.

Its subcellular location is the cell inner membrane. The catalysed reaction is di-trans,octa-cis-undecaprenyl diphosphate + H2O = di-trans,octa-cis-undecaprenyl phosphate + phosphate + H(+). Catalyzes the dephosphorylation of undecaprenyl diphosphate (UPP). Confers resistance to bacitracin. This Prochlorococcus marinus (strain MIT 9301) protein is Undecaprenyl-diphosphatase.